A 307-amino-acid chain; its full sequence is Putative protein p53 (307 aa).

Basic and acidic residues predominate over residues 44-53 (DPHEPTEANK). 2 disordered regions span residues 44–64 (DPHE…VKPQ) and 109–129 (ETKP…APEP).

The chain is Putative protein p53 (53) from Escherichia coli (Bacteriophage APSE-1).